A 273-amino-acid polypeptide reads, in one-letter code: Type III pantothenate kinase (273 aa).

Residue 5–12 participates in ATP binding; sequence DVGNSHVV. 112-115 is a substrate binding site; the sequence is GTDL. The Proton acceptor role is filled by aspartate 114. Aspartate 134 contributes to the K(+) binding site. Threonine 137 contributes to the ATP binding site. Residue threonine 189 coordinates substrate.

The protein belongs to the type III pantothenate kinase family. As to quaternary structure, homodimer. It depends on NH4(+) as a cofactor. The cofactor is K(+).

It is found in the cytoplasm. It catalyses the reaction (R)-pantothenate + ATP = (R)-4'-phosphopantothenate + ADP + H(+). The protein operates within cofactor biosynthesis; coenzyme A biosynthesis; CoA from (R)-pantothenate: step 1/5. Catalyzes the phosphorylation of pantothenate (Pan), the first step in CoA biosynthesis. The sequence is that of Type III pantothenate kinase from Treponema pallidum subsp. pallidum (strain SS14).